Here is a 70-residue protein sequence, read N- to C-terminus: Large ribosomal subunit protein bL31 (70 aa).

4 residues coordinate Zn(2+): C16, C18, C37, and C40.

Belongs to the bacterial ribosomal protein bL31 family. Type A subfamily. In terms of assembly, part of the 50S ribosomal subunit. It depends on Zn(2+) as a cofactor.

Functionally, binds the 23S rRNA. This Shewanella denitrificans (strain OS217 / ATCC BAA-1090 / DSM 15013) protein is Large ribosomal subunit protein bL31.